The chain runs to 795 residues: Phenylalanine--tRNA ligase beta subunit (795 aa).

A tRNA-binding domain is found at 39–148; that stretch reads AGVFDGVKVG…ENAPIGMDFR (110 aa). The B5 domain occupies 401–476; the sequence is PKPNQVALRR…RIYGYNNIPN (76 aa). Residues D454, D460, E463, and E464 each contribute to the Mg(2+) site. The 94-residue stretch at 701 to 794 folds into the FDX-ACB domain; sequence SKFPANRRDI…VSAQFGAALR (94 aa).

Belongs to the phenylalanyl-tRNA synthetase beta subunit family. Type 1 subfamily. In terms of assembly, tetramer of two alpha and two beta subunits. Requires Mg(2+) as cofactor.

The protein localises to the cytoplasm. The catalysed reaction is tRNA(Phe) + L-phenylalanine + ATP = L-phenylalanyl-tRNA(Phe) + AMP + diphosphate + H(+). The sequence is that of Phenylalanine--tRNA ligase beta subunit (pheT) from Vibrio cholerae serotype O1 (strain ATCC 39315 / El Tor Inaba N16961).